The chain runs to 642 residues: Terminase, large subunit (642 aa).

The tract at residues 1-48 (MISDAQKAANAAGAIATGLLSLIIPVPLTTVQWANKHYYLPKESSYTP) is interaction with the terminase small subunit. Residues 42–51 (KESSYTPGRW) carry the Q motif motif. A Walker A motif motif is present at residues 76–83 (KSARVGYT). Residues 166-353 (NYREKSVDVV…LDALKDPNGL (188 aa)) form a DNA packaging/ATPase region. Positions 174–179 (VVCYDE) match the Walker B motif motif. Catalysis depends on E179, which acts as the For ATPase activity. Position 401 (D401) interacts with Mg(2+). An endonuclease region spans residues 401-587 (DSQRNRFEMY…LWDNKKRRNE (187 aa)). 491 to 498 (GASVYGKP) lines the ATP pocket. The tract at residues 574-585 (KMRLLWDNKKRR) is basic. The segment at 589–617 (LDCLVYAYAALRVSVQRWQLDLAVLAKSR) is leucine zipper. Positions 611–642 (AVLAKSREEETTRPTLKELAAKLSGGVNGYSR) are prohead binding.

It belongs to the lambdavirus large terminase family. Heterotrimer of two small and one large terminase subunits. The catalytically competent terminase is composed of a tetramer of heterotrimers. The tetramer forms a ring structure large enough to encircle duplex DNA. Host IHFA/IHFB induces bending of viral DNA to facilitate the assembly of the terminase tetramer of heterotrimers. Interacts (via N-terminus) with the terminase small subunit (via C-terminus). Interacts (via C-terminus) with the portal protein; this interaction allows the packaging of viral DNA. Mg(2+) serves as cofactor.

Its subcellular location is the host cytoplasm. It carries out the reaction Endonucleolytic cleavage of DNA to give specific double-stranded fragments with terminal 5'-phosphates.. Functionally, the terminase large subunit acts as an ATP driven molecular motor necessary for viral DNA translocation into empty capsids and as an endonuclease that cuts the viral genome from the concetamer to initiate and to end the packaging reaction. The terminase lies at a unique vertex of the procapsid and is composed of two subunits, a small terminase subunit involved in viral DNA recognition (binding to packaging sequence cos), and a large terminase subunit possessing endonucleolytic and ATPase activities (DNA maturation and packaging). The terminase binds cooperatively with the host factor IHFA/IHFB to the cos site at the junction of adjacent viral genomes. The endonuclease activity cleaves the viral DNA generating 5'overhangs of 12 bp in length. The strand separation activity separates the cohesive ends generating the single-stranded 'sticky' ends of the mature genome. IHFA/IHFB is also necessary for the strand separation activity of the terminase. The terminase remains bound to the left end of the genome to be packaged, forming a stable DNA-terminase complex. In a reaction facilitated by the viral assembly catalyst gpFI, the DNA-terminase complex binds to the portal of the procapsid thereby activating the translocase activity of the terminase. The terminase packages the viral DNA into the procapsid until the next cos site on the concatemer reaches the complex. The downstream cos site is then cut generating the mature right end of the genome, the heterotrimer undocks from the DNA-filled head and remains bound to the left end of concatemer's next genome. In Escherichia coli (Bacteriophage 21), this protein is Terminase, large subunit (2).